The primary structure comprises 488 residues: Ribulose bisphosphate carboxylase large chain 1 (488 aa).

Residues Asn-128 and Thr-178 each coordinate substrate. Lys-180 functions as the Proton acceptor in the catalytic mechanism. Lys-182 serves as a coordination point for substrate. Residues Lys-206, Asp-208, and Glu-209 each coordinate Mg(2+). An N6-carboxylysine modification is found at Lys-206. The active-site Proton acceptor is the His-298. Residues Arg-299, His-331, and Ser-383 each coordinate substrate.

It belongs to the RuBisCO large chain family. Type I subfamily. As to quaternary structure, heterohexadecamer of 8 large chains and 8 small chains. It depends on Mg(2+) as a cofactor.

The catalysed reaction is 2 (2R)-3-phosphoglycerate + 2 H(+) = D-ribulose 1,5-bisphosphate + CO2 + H2O. It catalyses the reaction D-ribulose 1,5-bisphosphate + O2 = 2-phosphoglycolate + (2R)-3-phosphoglycerate + 2 H(+). Functionally, ruBisCO catalyzes two reactions: the carboxylation of D-ribulose 1,5-bisphosphate, the primary event in carbon dioxide fixation, as well as the oxidative fragmentation of the pentose substrate. Both reactions occur simultaneously and in competition at the same active site. The polypeptide is Ribulose bisphosphate carboxylase large chain 1 (Nitrobacter hamburgensis (strain DSM 10229 / NCIMB 13809 / X14)).